We begin with the raw amino-acid sequence, 180 residues long: Inner membrane-spanning protein YciB (180 aa).

5 helical membrane-spanning segments follow: residues 25–45, 54–74, 76–96, 118–138, and 150–170; these read QNAT…CYFV, IISV…GNSI, IKIK…MSGI, ITLS…NEIV, and FKVF…LPLL.

It belongs to the YciB family.

The protein localises to the cell inner membrane. Functionally, plays a role in cell envelope biogenesis, maintenance of cell envelope integrity and membrane homeostasis. In Rickettsia canadensis (strain McKiel), this protein is Inner membrane-spanning protein YciB.